The sequence spans 144 residues: Methylglyoxal synthase (144 aa).

Positions 1–144 (MNIALIAHDE…EEEQRKFLTD (144 aa)) constitute an MGS-like domain. Residues histidine 8, lysine 12, 34-37 (TGTT), and 54-55 (SG) each bind substrate. Aspartate 60 serves as the catalytic Proton donor/acceptor. Histidine 87 lines the substrate pocket.

The protein belongs to the methylglyoxal synthase family.

It carries out the reaction dihydroxyacetone phosphate = methylglyoxal + phosphate. Catalyzes the formation of methylglyoxal from dihydroxyacetone phosphate. This Exiguobacterium sibiricum (strain DSM 17290 / CCUG 55495 / CIP 109462 / JCM 13490 / 255-15) protein is Methylglyoxal synthase.